Reading from the N-terminus, the 250-residue chain is MFMMLKNKVAIVTGGTRGIGFAVVKKFIENGAAVSLWGSRQETVDQALEQLKELYPDAKISGKYPSLKDTAQVTAMINQVKEEFGAVDILVNNAGISQSTSFYNYQPEEFQKIVDLNVTAVFNCSQAAAKIMKEQGGGVILNTSSMVSIYGQPSGCGYPASKFAVNGLTKSLARELGCDNIRVNAVAPGITRTDMVAALPEAVIKPLIATIPLGRVGEPEDIANAFLFLASDMASYVTGEILSVDGAARS.

3 residues coordinate NADP(+): asparagine 93, tyrosine 158, and lysine 162. Tyrosine 158 functions as the Proton acceptor in the catalytic mechanism.

The protein belongs to the short-chain dehydrogenases/reductases (SDR) family.

It carries out the reaction lithocholate + NADP(+) = 3-oxo-5beta-cholan-24-oate + NADPH + H(+). The enzyme catalyses deoxycholate + NADP(+) = 12alpha-hydroxy-3-oxo-5beta-cholan-24-oate + NADPH + H(+). The catalysed reaction is deoxycholate + NAD(+) = 12alpha-hydroxy-3-oxo-5beta-cholan-24-oate + NADH + H(+). It catalyses the reaction cholate + NADP(+) = 7alpha,12alpha-dihydroxy-3-oxo-5beta-cholan-24-oate + NADPH + H(+). It carries out the reaction chenodeoxycholate + NADP(+) = 3-oxochenodeoxycholate + NADPH + H(+). Its function is as follows. Involved in the modification of secondary bile acids into iso-bile acids (3beta-bile acids) via epimerization of the 3-OH group through a 3-oxo-intermediate. Catalyzes the oxidation of deoxycholate (DCA) and lithocholate (LCA) to yield 12-alpha-hydroxy-3-oxo-5-beta-cholan-24-oate (3-oxo-DCA) and 3-oxo-5-beta-cholan-24-oate (3-oxo-LCA), respectively. Is also able to catalyze the oxidation of cholate (CA) and chenodeoxycholate (CDCA) into 3-dehydrocholate (3-oxo-CA) and 7-alpha-hydroxy-3-oxo-5-beta-cholan-24-oate (3-oxo-CDCA), respectively. Can also catalyze the reverse reactions in vitro. Accepts both NADPH and NADH as cosubstrates. The conversion of the abundant bile acid DCA into isoDCA by the gut bacterium R.gnavus favors the growth of the keystone commensal genus Bacteroides, since isoDCA is less cytotoxic than its parent compound, DCA; iso-bile acids have thus a potential role in modulating gut community composition. This Mediterraneibacter gnavus (strain ATCC 29149 / DSM 114966 / JCM 6515 / VPI C7-9) (Ruminococcus gnavus) protein is 3alpha-hydroxysteroid dehydrogenase.